The sequence spans 2641 residues: Inverse autotransporter adhesin YeeJ (2641 aa).

The first 26 residues, 1-26, serve as a signal peptide directing secretion; it reads MGIKLRRLTAGICLVTQLAFPMAAAA. Residues 50-98 enclose the LysM domain; it reads VPYILGALESAQSVAERFGISVAELRKLNQFRTFARGFDNVRQGDELDV. Residues 99 to 118 form a disordered region; the sequence is PAQVSEKKLTPPPGNSSDNL. The inverse autotransporter stretch occupies residues 125–400; that stretch reads TSQQIGSLLA…SRYDLVDRNN (276 aa). The tract at residues 513-605 is invasin 3 domain; it reads QKDSSVSLST…GVDAAKAPAV (93 aa). Big-1 domains lie at 617 to 711, 721 to 815, 822 to 913, 920 to 1017, 1024 to 1116, 1123 to 1220, 1227 to 1319, 1326 to 1423, 1430 to 1523, 1531 to 1633, 1641 to 1734, 1741 to 1837, 1844 to 1941, 1948 to 2032, 2048 to 2139, 2142 to 2236, and 2244 to 2336; these read HSSI…AGFI, IATL…VSFV, QVDL…VNFI, ALTL…MTFV, VVVL…VNIA, QVTL…VTFV, QVVL…VHFI, IIEL…SINV, HLTL…VTYV, EISL…VNFT, QVNL…VTLI, KLTS…PTEV, FTSL…LEAI, KLTL…VKVT, and VASF…ITLV. The C-type lectin domain stretch occupies residues 2538–2641; sequence KSWWVNAGDA…FAHATCYKNL (104 aa).

It belongs to the intimin/invasin family.

Its subcellular location is the cell outer membrane. Functionally, a probable inverse autotransporter, it may be involved in biofilm formation and cell adhesion. May bind peptidoglycan via its LysM domain. Upon overexpression shows increased mature biofilm formation. This is Inverse autotransporter adhesin YeeJ from Escherichia coli O17:K52:H18 (strain UMN026 / ExPEC).